Reading from the N-terminus, the 384-residue chain is NADP-dependent alcohol dehydrogenase 3 (384 aa).

The protein belongs to the iron-containing alcohol dehydrogenase family.

The catalysed reaction is a primary alcohol + NADP(+) = an aldehyde + NADPH + H(+). Functionally, has NADP-dependent alcohol dehydrogenase activity. The protein is NADP-dependent alcohol dehydrogenase 3 of Entamoeba histolytica (strain ATCC 30459 / HM-1:IMSS / ABRM).